Consider the following 848-residue polypeptide: DNA mismatch repair protein MutS (848 aa).

605–612 (GPNMAGKS) serves as a coordination point for ATP.

This sequence belongs to the DNA mismatch repair MutS family.

This protein is involved in the repair of mismatches in DNA. It is possible that it carries out the mismatch recognition step. This protein has a weak ATPase activity. The polypeptide is DNA mismatch repair protein MutS (Leptospira borgpetersenii serovar Hardjo-bovis (strain JB197)).